Reading from the N-terminus, the 105-residue chain is Thioredoxin (105 aa).

The region spanning 2 to 105 (VKQIESKYAF…KLEATINELI (104 aa)) is the Thioredoxin domain. Residue lysine 3 is modified to N6-acetyllysine. N6-succinyllysine is present on lysine 8. Active-site nucleophile residues include cysteine 32 and cysteine 35. Cysteines 32 and 35 form a disulfide. N6-acetyllysine is present on lysine 39. S-nitrosocysteine is present on residues cysteine 62 and cysteine 69. Cysteine 73 bears the S-nitrosocysteine; alternate mark. Residue lysine 94 is modified to N6-acetyllysine; alternate. At lysine 94 the chain carries N6-succinyllysine; alternate.

It belongs to the thioredoxin family. In terms of assembly, homodimer; disulfide-linked. Interacts with TXNIP through the redox-active site. Interacts with MAP3K5 and CASP3. Interacts with APEX1; the interaction stimulates the FOS/JUN AP-1 DNA-binding activity in a redox-dependent manner. In the fully reduced protein, both Cys-69 and Cys-73 are nitrosylated in response to nitric oxide (NO). When two disulfide bonds are present in the protein, only Cys-73 is nitrosylated. Cys-73 can serve as donor for nitrosylation of target proteins. As to expression, erythrocytes.

It is found in the nucleus. Its subcellular location is the cytoplasm. The protein localises to the secreted. In terms of biological role, participates in various redox reactions through the reversible oxidation of its active center dithiol to a disulfide and catalyzes dithiol-disulfide exchange reactions. Plays a role in the reversible S-nitrosylation of cysteine residues in target proteins, and thereby contributes to the response to intracellular nitric oxide. Nitrosylates the active site Cys of CASP3 in response to nitric oxide (NO), and thereby inhibits caspase-3 activity. Induces the FOS/JUN AP-1 DNA binding activity in ionizing radiation (IR) cells through its oxidation/reduction status and stimulates AP-1 transcriptional activity. In Sus scrofa (Pig), this protein is Thioredoxin (TXN).